The chain runs to 93 residues: Class II hydrophobin 1 (93 aa).

An N-terminal signal peptide occupies residues 1 to 16 (MKFFAVAALFVASAMA). 4 cysteine pairs are disulfide-bonded: Cys24–Cys74, Cys35–Cys65, Cys36–Cys48, and Cys75–Cys86.

This sequence belongs to the cerato-ulmin hydrophobin family. In terms of assembly, interacts with maize ubiquilin 1-like (UBL) protein. Homotetramer. Further self-assembles to form highly ordered films at water-air interfaces through intermolecular interactions.

The protein localises to the cell membrane. Functionally, aerial growth, conidiation, and dispersal of filamentous fungi in the environment rely upon a capability of their secreting small amphipathic proteins called hydrophobins (HPBs) with low sequence identity. Class I can self-assemble into an outermost layer of rodlet bundles on aerial cell surfaces, conferring cellular hydrophobicity that supports fungal growth, development and dispersal; whereas Class II form highly ordered films at water-air interfaces through intermolecular interactions but contribute nothing to the rodlet structure. Hyd1 is a class II hydrophobin that acts as an elicitor of induced systemic resistance (ISR) in plants. During interaction with the plant, binds with the maize target protein UBL in order to recruit more UBL proteins in maize roots to elicit plant defense responses, including cell death as well as brassinosteroid, jasmonate (JA) and ethylene (ET) signaling. The polypeptide is Class II hydrophobin 1 (Trichoderma harzianum (Hypocrea lixii)).